The primary structure comprises 526 residues: MLGRTLREVSAALKQGQITPTELCQKCLSLIKKTKFLNAYITVSEEVALKQAEESEKRYKKGHSLGDLDGIPIAVKDNFSTSGIETTCASNMLKGYVPPYNATVVQKLLDQGAVLMGKTNLDEFAMGSGSTDGVFGPVKNPWSYSKQYKEKTKHKAHGENEDSNWLITGGSSGGSAAAVATFTCFAALGSDTGGSTRNPAAHCGVVGFKPSYGLVSRHGLIPLVNSMDVPGILTRCVDDAAIVLGMLAGHDPKDSTTVQDPVKPFTLPSLTDVSKLCIGIPKEYLTPELSSEVQSLWSKAANLFESEGAKVIEVSLPHTSYSIVCYHVLCTSEVASNMARFDGLEYGHRCDIDVSTEAMYAATRREGFNDVVRGRILSGNFFLLKENYENYFIKAQKVRRLIANDFVNVFNSGVDVLLTPTTLREAVPYQEFIKEDNRTRSAQDDIFTQAVNMAGLPAVSPVALSNQGLPVGLQFIGRAFHDQQLLTVAKWFEKQVQFPVTQLQELMDDCSSVFEIEKLASVSLKQ.

Active-site charge relay system residues include K76 and S171. Catalysis depends on S195, which acts as the Acyl-ester intermediate.

Belongs to the amidase family. GatA subfamily. Subunit of the heterotrimeric GatCAB amidotransferase (AdT) complex, composed of A (QRSL1), B (GATB) and C (GATC) subunits.

It localises to the mitochondrion. It catalyses the reaction L-glutamyl-tRNA(Gln) + L-glutamine + ATP + H2O = L-glutaminyl-tRNA(Gln) + L-glutamate + ADP + phosphate + H(+). Functionally, allows the formation of correctly charged Gln-tRNA(Gln) through the transamidation of misacylated Glu-tRNA(Gln) in the mitochondria. The reaction takes place in the presence of glutamine and ATP through an activated gamma-phospho-Glu-tRNA(Gln). The sequence is that of Glutamyl-tRNA(Gln) amidotransferase subunit A, mitochondrial from Canis lupus familiaris (Dog).